The following is a 286-amino-acid chain: Protoheme IX farnesyltransferase (286 aa).

8 consecutive transmembrane segments (helical) span residues 14-31 (FRLT…YILA), 38-58 (WLNL…ANII), 94-114 (LFLI…ALIL), 135-155 (IAVF…WIAV), 165-185 (VLFA…AWVL), 207-227 (TATI…LPYL), 228-248 (FGMS…LFFF), and 262-282 (ALLL…AFVL).

It belongs to the UbiA prenyltransferase family. Protoheme IX farnesyltransferase subfamily.

Its subcellular location is the cell inner membrane. It carries out the reaction heme b + (2E,6E)-farnesyl diphosphate + H2O = Fe(II)-heme o + diphosphate. The protein operates within porphyrin-containing compound metabolism; heme O biosynthesis; heme O from protoheme: step 1/1. Converts heme B (protoheme IX) to heme O by substitution of the vinyl group on carbon 2 of heme B porphyrin ring with a hydroxyethyl farnesyl side group. This Cytophaga hutchinsonii (strain ATCC 33406 / DSM 1761 / CIP 103989 / NBRC 15051 / NCIMB 9469 / D465) protein is Protoheme IX farnesyltransferase.